Here is a 411-residue protein sequence, read N- to C-terminus: Isocitrate dehydrogenase [NADP] peroxisomal (411 aa).

NADP(+)-binding positions include 78-80 (TIT) and Arg85. Thr80 is a substrate binding site. Substrate contacts are provided by residues 97 to 103 (SPNGTLR), Arg112, and Arg135. Asp254 provides a ligand contact to Mn(2+). An NADP(+)-binding site is contributed by Lys262. Asp277 contributes to the Mn(2+) binding site. NADP(+) contacts are provided by residues 312–317 (GTVTRH) and Asn330.

Belongs to the isocitrate and isopropylmalate dehydrogenases family. Mg(2+) is required as a cofactor. Mn(2+) serves as cofactor.

The protein resides in the peroxisome. The enzyme catalyses D-threo-isocitrate + NADP(+) = 2-oxoglutarate + CO2 + NADPH. In terms of biological role, may play a role in N-alkane metabolism, glutamate synthesis, and/or NADPH generation in the peroxisomes. This Candida tropicalis (Yeast) protein is Isocitrate dehydrogenase [NADP] peroxisomal (IDP2).